A 230-amino-acid polypeptide reads, in one-letter code: Demethylluteothin O-methyltransferase (230 aa).

This sequence belongs to the methyltransferase superfamily.

The catalysed reaction is demethylluteothin + S-adenosyl-L-methionine = luteothin + S-adenosyl-L-homocysteine. Its pathway is antibiotic biosynthesis. It participates in polyketide biosynthesis. In terms of biological role, methyltransferase involved in the biosynthesis of the antibiotic aureothin, a nitroaryl polyketide metabolite with antifungal, cytotoxic and insecticidal activities. Catalyzes the methylation of demethylluteothin to luteothin (also called deoxyaureothin). Is specific for its gamma-pyrone substrate, and does not act on the alpha-pyrone isomer. The chain is Demethylluteothin O-methyltransferase from Streptomyces thioluteus.